A 248-amino-acid chain; its full sequence is Aspartate/glutamate leucyltransferase (248 aa).

Belongs to the R-transferase family. Bpt subfamily.

The protein localises to the cytoplasm. The catalysed reaction is N-terminal L-glutamyl-[protein] + L-leucyl-tRNA(Leu) = N-terminal L-leucyl-L-glutamyl-[protein] + tRNA(Leu) + H(+). It carries out the reaction N-terminal L-aspartyl-[protein] + L-leucyl-tRNA(Leu) = N-terminal L-leucyl-L-aspartyl-[protein] + tRNA(Leu) + H(+). Its function is as follows. Functions in the N-end rule pathway of protein degradation where it conjugates Leu from its aminoacyl-tRNA to the N-termini of proteins containing an N-terminal aspartate or glutamate. This chain is Aspartate/glutamate leucyltransferase, found in Methylorubrum populi (strain ATCC BAA-705 / NCIMB 13946 / BJ001) (Methylobacterium populi).